Here is a 173-residue protein sequence, read N- to C-terminus: Adenine phosphoribosyltransferase (173 aa).

It belongs to the purine/pyrimidine phosphoribosyltransferase family. In terms of assembly, homodimer.

It is found in the cytoplasm. It carries out the reaction AMP + diphosphate = 5-phospho-alpha-D-ribose 1-diphosphate + adenine. Its pathway is purine metabolism; AMP biosynthesis via salvage pathway; AMP from adenine: step 1/1. In terms of biological role, catalyzes a salvage reaction resulting in the formation of AMP, that is energically less costly than de novo synthesis. This Petrotoga mobilis (strain DSM 10674 / SJ95) protein is Adenine phosphoribosyltransferase.